A 128-amino-acid chain; its full sequence is MTRIKRGYIARRRRTKIRLFASSFRGAHSRLTRTITQQKIRALVSAHRDRDRKKRDFRRLWITRINAVIRERGVSYSYSRLIHDLYKRQLLLNRKILAQIAISNRNCLYMISNEIIKEVDWKESTRII.

It belongs to the bacterial ribosomal protein bL20 family.

The protein localises to the plastid. The protein resides in the chloroplast. Functionally, binds directly to 23S ribosomal RNA and is necessary for the in vitro assembly process of the 50S ribosomal subunit. It is not involved in the protein synthesizing functions of that subunit. The polypeptide is Large ribosomal subunit protein bL20c (Nicotiana sylvestris (Wood tobacco)).